The following is a 211-amino-acid chain: Xanthine phosphoribosyltransferase (211 aa).

Xanthine contacts are provided by Leu31 and Asn38. Position 138–142 (138–142 (ANGRT)) interacts with 5-phospho-alpha-D-ribose 1-diphosphate. A xanthine-binding site is contributed by Lys166.

Belongs to the purine/pyrimidine phosphoribosyltransferase family. Xpt subfamily. In terms of assembly, homodimer.

It is found in the cytoplasm. It carries out the reaction XMP + diphosphate = xanthine + 5-phospho-alpha-D-ribose 1-diphosphate. It functions in the pathway purine metabolism; XMP biosynthesis via salvage pathway; XMP from xanthine: step 1/1. Its function is as follows. Converts the preformed base xanthine, a product of nucleic acid breakdown, to xanthosine 5'-monophosphate (XMP), so it can be reused for RNA or DNA synthesis. This is Xanthine phosphoribosyltransferase from Chloroflexus aurantiacus (strain ATCC 29364 / DSM 637 / Y-400-fl).